We begin with the raw amino-acid sequence, 284 residues long: Thymidylate synthase (284 aa).

Arg-34 is a binding site for dUMP. Position 64 (His-64) interacts with (6R)-5,10-methylene-5,6,7,8-tetrahydrofolate. Residue 139 to 140 (RR) coordinates dUMP. Residue Cys-159 is the Nucleophile of the active site. Residues 186–189 (RSAD), Asn-197, and 227–229 (HIY) contribute to the dUMP site. Asp-189 contributes to the (6R)-5,10-methylene-5,6,7,8-tetrahydrofolate binding site. Position 283 (Ala-283) interacts with (6R)-5,10-methylene-5,6,7,8-tetrahydrofolate.

It belongs to the thymidylate synthase family. Bacterial-type ThyA subfamily. Homodimer.

It localises to the cytoplasm. The catalysed reaction is dUMP + (6R)-5,10-methylene-5,6,7,8-tetrahydrofolate = 7,8-dihydrofolate + dTMP. It functions in the pathway pyrimidine metabolism; dTTP biosynthesis. In terms of biological role, catalyzes the reductive methylation of 2'-deoxyuridine-5'-monophosphate (dUMP) to 2'-deoxythymidine-5'-monophosphate (dTMP) while utilizing 5,10-methylenetetrahydrofolate (mTHF) as the methyl donor and reductant in the reaction, yielding dihydrofolate (DHF) as a by-product. This enzymatic reaction provides an intracellular de novo source of dTMP, an essential precursor for DNA biosynthesis. This Polaromonas sp. (strain JS666 / ATCC BAA-500) protein is Thymidylate synthase.